We begin with the raw amino-acid sequence, 257 residues long: Ribonuclease HII (257 aa).

Positions 72–257 (TYIAGIDEVG…FAPIKDMIQK (186 aa)) constitute an RNase H type-2 domain. Residues Asp-78, Glu-79, and Asp-170 each contribute to the a divalent metal cation site.

The protein belongs to the RNase HII family. Mn(2+) is required as a cofactor. It depends on Mg(2+) as a cofactor.

The protein resides in the cytoplasm. It catalyses the reaction Endonucleolytic cleavage to 5'-phosphomonoester.. In terms of biological role, endonuclease that specifically degrades the RNA of RNA-DNA hybrids. The chain is Ribonuclease HII from Bacillus cereus (strain ATCC 14579 / DSM 31 / CCUG 7414 / JCM 2152 / NBRC 15305 / NCIMB 9373 / NCTC 2599 / NRRL B-3711).